A 358-amino-acid chain; its full sequence is DNA primase large subunit PriL (358 aa).

C234, C306, C315, and C322 together coordinate [4Fe-4S] cluster. Residues 335-358 form a disordered region; sequence KLDDTDEEELVDWREDEGEEEADA. Acidic residues predominate over residues 338–358; sequence DTDEEELVDWREDEGEEEADA.

The protein belongs to the eukaryotic-type primase large subunit family. In terms of assembly, heterodimer of a small subunit (PriS) and a large subunit (PriL). It depends on [4Fe-4S] cluster as a cofactor.

Functionally, regulatory subunit of DNA primase, an RNA polymerase that catalyzes the synthesis of short RNA molecules used as primers for DNA polymerase during DNA replication. Stabilizes and modulates the activity of the small subunit, increasing the rate of DNA synthesis, and conferring RNA synthesis capability. The DNA polymerase activity may enable DNA primase to also catalyze primer extension after primer synthesis. May also play a role in DNA repair. The polypeptide is DNA primase large subunit PriL (Haloarcula marismortui (strain ATCC 43049 / DSM 3752 / JCM 8966 / VKM B-1809) (Halobacterium marismortui)).